The following is a 1129-amino-acid chain: Eukaryotic translation initiation factor 3 subunit A (1129 aa).

The PCI domain occupies 319–502 (LQRMAAHVLL…NSIYFGTDLT (184 aa)). Disordered stretches follow at residues 590–633 (NNAR…NEIQ) and 836–1129 (AAEA…VKRR). 5 stretches are compositionally biased toward basic and acidic residues: residues 836 to 903 (AAEA…RSER), 923 to 964 (DRND…KDTD), 971 to 985 (WRVR…RERG), 994 to 1044 (GRDD…DQPQ), and 1053 to 1076 (DSPR…RDIR). Over residues 1080-1091 (PKEGGGGGGGGN) the composition is skewed to gly residues. A compositionally biased stretch (basic and acidic residues) spans 1098–1119 (PRDEKPPVKRDQPQDKENKAGD).

This sequence belongs to the eIF-3 subunit A family. As to quaternary structure, component of the eukaryotic translation initiation factor 3 (eIF-3) complex. The eIF-3 complex interacts with pix.

It is found in the cytoplasm. RNA-binding component of the eukaryotic translation initiation factor 3 (eIF-3) complex, which is involved in protein synthesis of a specialized repertoire of mRNAs and, together with other initiation factors, stimulates binding of mRNA and methionyl-tRNAi to the 40S ribosome. The eIF-3 complex specifically targets and initiates translation of a subset of mRNAs involved in cell proliferation. The sequence is that of Eukaryotic translation initiation factor 3 subunit A from Drosophila mojavensis (Fruit fly).